The sequence spans 156 residues: Small ribosomal subunit protein uS7 (156 aa).

It belongs to the universal ribosomal protein uS7 family. As to quaternary structure, part of the 30S ribosomal subunit. Contacts proteins S9 and S11.

Functionally, one of the primary rRNA binding proteins, it binds directly to 16S rRNA where it nucleates assembly of the head domain of the 30S subunit. Is located at the subunit interface close to the decoding center, probably blocks exit of the E-site tRNA. The sequence is that of Small ribosomal subunit protein uS7 from Mycobacterium ulcerans (strain Agy99).